The primary structure comprises 122 residues: Large ribosomal subunit protein uL14 (122 aa).

It belongs to the universal ribosomal protein uL14 family. In terms of assembly, part of the 50S ribosomal subunit. Forms a cluster with proteins L3 and L19. In the 70S ribosome, L14 and L19 interact and together make contacts with the 16S rRNA in bridges B5 and B8.

In terms of biological role, binds to 23S rRNA. Forms part of two intersubunit bridges in the 70S ribosome. In Azoarcus sp. (strain BH72), this protein is Large ribosomal subunit protein uL14.